Reading from the N-terminus, the 237-residue chain is Bax inhibitor 1 (237 aa).

Residues 1–29 (MNIFDRKINFDALLKFSHITPSTQQHLKK) lie on the Cytoplasmic side of the membrane. A Glycyl lysine isopeptide (Lys-Gly) (interchain with G-Cter in ubiquitin) cross-link involves residue K7. The helical transmembrane segment at 30–50 (VYASFALCMFVAAAGAYVHVV) threads the bilayer. The Lumenal portion of the chain corresponds to 51–52 (TR). The chain crosses the membrane as a helical span at residues 53 to 73 (FIQAGLLSALGALALMICLMA). Residues 74–86 (TPHSHETEQKRLG) are Cytoplasmic-facing. A helical membrane pass occupies residues 87 to 107 (LLAGFAFLTGVGLGPALELCI). The Lumenal segment spans residues 108–112 (AINPS). The chain crosses the membrane as a helical span at residues 113–133 (ILPTAFMGTAMIFTCFSLSAL). At 134–139 (YARRRS) the chain is on the cytoplasmic side. Residues 140 to 160 (YLFLGGILMSAMSLMFVSSLG) form a helical membrane-spanning segment. At 161–166 (NLFFGS) the chain is on the lumenal side. Residues 167–187 (IWLFQANLYMGLLVMCGFVLF) traverse the membrane as a helical segment. Over 188 to 206 (DTQLIIEKAEHGDKDYIWH) the chain is Cytoplasmic. Positions 207–227 (CIDLFLDFVTLFRKLMLILAF) form an intramembrane region, helical. At 228–237 (NEKDKKKEKK) the chain is on the cytoplasmic side.

This sequence belongs to the BI1 family. Interacts with BCL2 and BCL2L1. Interacts with ERN1. In terms of processing, ubiquitinated by BFAR, leading to proteasomal degradation. As to expression, highly abundant in adult testis.

The protein localises to the endoplasmic reticulum membrane. In terms of biological role, endoplasmic reticulum (ER)-resident protein that confers cellular protection as an anti-apoptotic protein by limiting multiple stress-inducing pathways surrounding the endoplasmic reticulum and mitochondria. Inhibits the activities of the key sensor for the endoplasmic reticulum unfolded protein response IRE1alpha/ERN1 both directly and by blocking BAX/BAK binding. Modulates ER calcium homeostasis by acting as a calcium-leak channel. Negatively regulates autophagy and autophagosome formation, especially during periods of nutrient deprivation, and reduces cell survival during starvation. In Rattus norvegicus (Rat), this protein is Bax inhibitor 1 (Tmbim6).